The primary structure comprises 196 residues: DnaA initiator-associating protein DiaA (196 aa).

One can recognise an SIS domain in the interval 34-196 (LVQSLLNGNK…DNTLFPHQDV (163 aa)).

The protein belongs to the SIS family. DiaA subfamily. As to quaternary structure, homotetramer; dimer of dimers.

Its function is as follows. Required for the timely initiation of chromosomal replication via direct interactions with the DnaA initiator protein. The sequence is that of DnaA initiator-associating protein DiaA from Escherichia coli O6:K15:H31 (strain 536 / UPEC).